Here is a 212-residue protein sequence, read N- to C-terminus: Deoxyribose-phosphate aldolase (212 aa).

The active-site Proton donor/acceptor is Asp89. The active-site Schiff-base intermediate with acetaldehyde is Lys151. The active-site Proton donor/acceptor is Lys180.

Belongs to the DeoC/FbaB aldolase family. DeoC type 1 subfamily.

The protein localises to the cytoplasm. The enzyme catalyses 2-deoxy-D-ribose 5-phosphate = D-glyceraldehyde 3-phosphate + acetaldehyde. It participates in carbohydrate degradation; 2-deoxy-D-ribose 1-phosphate degradation; D-glyceraldehyde 3-phosphate and acetaldehyde from 2-deoxy-alpha-D-ribose 1-phosphate: step 2/2. Its function is as follows. Catalyzes a reversible aldol reaction between acetaldehyde and D-glyceraldehyde 3-phosphate to generate 2-deoxy-D-ribose 5-phosphate. In Clostridium botulinum (strain Loch Maree / Type A3), this protein is Deoxyribose-phosphate aldolase.